Reading from the N-terminus, the 579-residue chain is Fatty-acid amide hydrolase 1 (579 aa).

The helical transmembrane segment at 9–29 (AFSGPSGVALACCLVAAALAL) threads the bilayer. The Cytoplasmic portion of the chain corresponds to 30-403 (RWSSRRMARG…GDYVDSCLGD (374 aa)). K142 functions as the Charge relay system in the catalytic mechanism. Residues M191, S217, and 238–241 (IGGS) each bind substrate. S217 acts as the Charge relay system in catalysis. S241 serves as the catalytic Acyl-ester intermediate. S241 is subject to Phosphoserine. An intramembrane segment occupies 404 to 433 (LISILRLPKWLKGLLAFMLRPLLPRLAGFL). Residues 434 to 579 (SSLRPRSAGK…RLMAPGRQPS (146 aa)) lie on the Cytoplasmic side of the membrane.

This sequence belongs to the amidase family. In terms of assembly, homodimer.

It localises to the endoplasmic reticulum membrane. The protein resides in the golgi apparatus membrane. The catalysed reaction is N-(5Z,8Z,11Z,14Z-eicosatetraenoyl)-ethanolamine + H2O = ethanolamine + (5Z,8Z,11Z,14Z)-eicosatetraenoate. The enzyme catalyses (9Z)-octadecenamide + H2O = (9Z)-octadecenoate + NH4(+). It catalyses the reaction 2-(5Z,8Z,11Z,14Z-eicosatetraenoyl)-glycerol + H2O = glycerol + (5Z,8Z,11Z,14Z)-eicosatetraenoate + H(+). It carries out the reaction 1-O-methyl-(5Z,8Z,11Z,14Z)-eicosatetraenoate + H2O = methanol + (5Z,8Z,11Z,14Z)-eicosatetraenoate + H(+). The catalysed reaction is (9Z,12Z,15Z)-octadecatrienamide + H2O = (9Z,12Z,15Z)-octadecatrienoate + NH4(+). The enzyme catalyses (5Z,8Z,11Z,14Z)-eicosatetraenamide + H2O = (5Z,8Z,11Z,14Z)-eicosatetraenoate + NH4(+). It catalyses the reaction (6Z)-octadecenamide + H2O = (6Z)-octadecenoate + NH4(+). It carries out the reaction (15Z)-tetracosenamide + H2O = (15Z)-tetracosenoate + NH4(+). The catalysed reaction is (8Z,11Z,14Z)-eicosatrienamide + H2O = (8Z,11Z,14Z)-eicosatrienoate + NH4(+). The enzyme catalyses (11Z,14Z,17Z)-eicosatrienamide + H2O = (11Z,14Z,17Z)-eicosatrienoate + NH4(+). It catalyses the reaction (11Z,14Z)-eicosadienamide + H2O = (11Z,14Z)-eicosadienoate + NH4(+). It carries out the reaction (9Z,12Z)-octadecadienamide + H2O = (9Z,12Z)-octadecadienoate + NH4(+). The catalysed reaction is tetradecamide + H2O = tetradecanoate + NH4(+). The enzyme catalyses N-(9Z-octadecenoyl) ethanolamine + H2O = ethanolamine + (9Z)-octadecenoate. It catalyses the reaction N-(9Z-octadecenoyl)-taurine + H2O = taurine + (9Z)-octadecenoate. It carries out the reaction (11Z)-eicosenamide + H2O = (11Z)-eicosenoate + NH4(+). The catalysed reaction is N-(9Z-hexadecenoyl) ethanolamine + H2O = (9Z)-hexadecenoate + ethanolamine. The enzyme catalyses N-octadecanoyl ethanolamine + H2O = octadecanoate + ethanolamine. It catalyses the reaction N-docosanoyl-ethanolamine + H2O = docosanoate + ethanolamine. It carries out the reaction N-tetracosanoyl-taurine + H2O = tetracosanoate + taurine. The catalysed reaction is N-(15Z-tetracosenoyl)-ethanolamine + H2O = (15Z)-tetracosenoate + ethanolamine. The enzyme catalyses N-docosanoyl-taurine + H2O = docosanoate + taurine. It catalyses the reaction N-(15Z-tetracosenoyl)-taurine + H2O = (15Z)-tetracosenoate + taurine. It carries out the reaction N-tricosanoyl-taurine + H2O = tricosanoate + taurine. The catalysed reaction is (9Z)-octadecenoate + glycine = N-(9Z-octadecenoyl)glycine + H2O. The enzyme catalyses N-(5Z,8Z,11Z,14Z)-eicosatetraenoyl-glycine + H2O = (5Z,8Z,11Z,14Z)-eicosatetraenoate + glycine. It catalyses the reaction N-(5Z,8Z,11Z,14Z-eicosatetraenoyl)-L-serine + H2O = (5Z,8Z,11Z,14Z)-eicosatetraenoate + L-serine. With respect to regulation, inhibited by trifluoromethyl ketone. Catalyzes the hydrolysis of endogenous amidated lipids like the sleep-inducing lipid oleamide ((9Z)-octadecenamide), the endocannabinoid anandamide (N-(5Z,8Z,11Z,14Z-eicosatetraenoyl)-ethanolamine), as well as other fatty amides, to their corresponding fatty acids, thereby regulating the signaling functions of these molecules. Also catalyzes the hydrolysis of the endocannabinoid 2-arachidonoylglycerol (2-(5Z,8Z,11Z,14Z-eicosatetraenoyl)-glycerol). FAAH cooperates with PM20D1 in the hydrolysis of amino acid-conjugated fatty acids such as N-fatty acyl glycine and N-fatty acyl-L-serine, thereby acting as a physiological regulator of specific subsets of intracellular, but not of extracellular, N-fatty acyl amino acids. This is Fatty-acid amide hydrolase 1 (FAAH) from Sus scrofa (Pig).